A 428-amino-acid polypeptide reads, in one-letter code: Trigger factor (428 aa).

The region spanning 163–248 (GDTVVIDFEG…VHEVKAKQLP (86 aa)) is the PPIase FKBP-type domain.

This sequence belongs to the FKBP-type PPIase family. Tig subfamily.

Its subcellular location is the cytoplasm. It carries out the reaction [protein]-peptidylproline (omega=180) = [protein]-peptidylproline (omega=0). Its function is as follows. Involved in protein export. Acts as a chaperone by maintaining the newly synthesized protein in an open conformation. Functions as a peptidyl-prolyl cis-trans isomerase. This chain is Trigger factor, found in Geobacillus kaustophilus (strain HTA426).